Consider the following 352-residue polypeptide: Fatty acid desaturase (352 aa).

2 helical membrane-spanning segments follow: residues 28-48 and 55-75; these read SLIQ…LAYL and LLTL…FIIF. Residues 76–80 carry the Histidine box-1 motif; the sequence is HDCCH. A helical transmembrane segment spans residues 89 to 109; sequence YNHILGFLTGVLTLFPYLQWQ. A Histidine box-2 motif is present at residues 112–116; it reads HSIHH. The next 3 helical transmembrane spans lie at 151-171, 186-206, and 209-229; these read LYRN…LITN, TYLT…IFGW, and FLLV…WLFY. A Histidine box-3 motif is present at residues 274-278; that stretch reads HHVHH.

It belongs to the fatty acid desaturase type 1 family.

It localises to the cell membrane. The protein operates within lipid metabolism; fatty acid metabolism. Its function is as follows. Catalyzes the introduction of a cis-double bond at the delta(5) position of existing saturated fatty acids attached to membrane phospholipids. It is not strictly specific for palmitic acid (C16) but can also accept C14 as well as C18 species to yield unsaturated fatty acids. The polypeptide is Fatty acid desaturase (des) (Bacillus subtilis (strain 168)).